A 192-amino-acid chain; its full sequence is uncharacterized protein (192 aa).

2 disordered regions span residues 1-37 (MASSCPGTPSPAGLPPPSVATPGETLGPAAPPEPAFP) and 146-192 (ARGP…EQNK). Pro residues-rich tracts occupy residues 8 to 19 (TPSPAGLPPPSV) and 159 to 180 (APPPPSRSPRPALPATAPPGWP).

This is an uncharacterized protein from Homo sapiens (Human).